The following is a 294-amino-acid chain: 4-hydroxy-tetrahydrodipicolinate synthase (294 aa).

Thr44 serves as a coordination point for pyruvate. Tyr132 functions as the Proton donor/acceptor in the catalytic mechanism. Catalysis depends on Lys160, which acts as the Schiff-base intermediate with substrate. A pyruvate-binding site is contributed by Ile205.

It belongs to the DapA family. In terms of assembly, homotetramer; dimer of dimers.

It localises to the cytoplasm. The catalysed reaction is L-aspartate 4-semialdehyde + pyruvate = (2S,4S)-4-hydroxy-2,3,4,5-tetrahydrodipicolinate + H2O + H(+). The protein operates within amino-acid biosynthesis; L-lysine biosynthesis via DAP pathway; (S)-tetrahydrodipicolinate from L-aspartate: step 3/4. Its function is as follows. Catalyzes the condensation of (S)-aspartate-beta-semialdehyde [(S)-ASA] and pyruvate to 4-hydroxy-tetrahydrodipicolinate (HTPA). The polypeptide is 4-hydroxy-tetrahydrodipicolinate synthase (Kosmotoga olearia (strain ATCC BAA-1733 / DSM 21960 / TBF 19.5.1)).